A 304-amino-acid polypeptide reads, in one-letter code: Porphobilinogen deaminase (304 aa).

Position 240 is an S-(dipyrrolylmethanemethyl)cysteine (Cys-240).

It belongs to the HMBS family. As to quaternary structure, monomer. It depends on dipyrromethane as a cofactor.

It catalyses the reaction 4 porphobilinogen + H2O = hydroxymethylbilane + 4 NH4(+). It participates in porphyrin-containing compound metabolism; protoporphyrin-IX biosynthesis; coproporphyrinogen-III from 5-aminolevulinate: step 2/4. In terms of biological role, tetrapolymerization of the monopyrrole PBG into the hydroxymethylbilane pre-uroporphyrinogen in several discrete steps. The chain is Porphobilinogen deaminase from Xanthomonas axonopodis pv. citri (strain 306).